Here is a 268-residue protein sequence, read N- to C-terminus: Casein kinase II subunit beta (268 aa).

Residues 222–268 (LSNNNQNNQNNNINNNNNNNNNNNNNNNNNNNNQQNNNNQQNNNTNK) are disordered. Low complexity predominate over residues 224 to 268 (NNNQNNQNNNINNNNNNNNNNNNNNNNNNNNQQNNNNQQNNNTNK).

It belongs to the casein kinase 2 subunit beta family. As to quaternary structure, casein kinase II/CK2 is a tetramer composed of two alpha subunit and two beta subunits.

Functionally, regulatory subunit of casein kinase II/CK2. As part of the kinase complex regulates the basal catalytic activity of the alpha subunit a constitutively active serine/threonine-protein kinase that phosphorylates a large number of substrates containing acidic residues C-terminal to the phosphorylated serine or threonine. In Dictyostelium discoideum (Social amoeba), this protein is Casein kinase II subunit beta (csnk2b).